The sequence spans 671 residues: MESRKLISATDIQYSASLLNSLNEQRGHGLFCDVTVIVEDRKFRAHRNILSASSTYFHQLFSVAGQVVELSFIRAEIFAEILNYIYSSKVVRVRADLLDELIKSGQLLGVKFIAELGVPLSQVKSISGTEQDGTAETLPSSSSDKSLDMEKSKDEAQDNGATVMPIITESFSLSAEDNEMKKIIVTDSDDDDDDDVIFCSEILPAKEDLPSNNTATQVQPNPASVAISEVTPCASNNSPPVTNITPTQLPTPVNQATLSQTQGSEELLVSSASTHLTPNIILLNQAPLTAPPSASSSLPNHMSSSVNVLVQNQQTPNSAVLTGNKAEEEEEIIDDDDDIISSSPDSAVSNTSLVPQADNSKSTTLDGSLTQKMQIPVLPQEPPSNSLKISDVITRNTNDPGLRSKHVMEGQKIITLDTATEIEGLSTGCKVYANIGEDTYDIVIPVKDDPDGGEAKLDNELPKTSGSEPPNKRMKVKHDDHYELIVDGRVYYICIVCKRSYVCLTSLRRHFNIHSWEKKYQCRYCDKVFPLAEYRTKHEIHHTGERRYQCLTCGKSFINYQFMSSHIKSVHSQDPSGDSKLYRLHPCKSLQIRQYAYLSNKSSAMPVMKDDAVGYKVDAGKEPPVGTTSTPPQNKSTFWEDIFIQQENDSIFKQNVTDGSTEFEFIIPESY.

An interaction with NCOR1 region spans residues 1–103; sequence MESRKLISAT…RADLLDELIK (103 aa). The tract at residues 1–136 is self-association; sequence MESRKLISAT…SGTEQDGTAE (136 aa). Positions 32 to 94 constitute a BTB domain; it reads CDVTVIVEDR…IYSSKVVRVR (63 aa). A compositionally biased stretch (polar residues) spans 127-144; sequence SGTEQDGTAETLPSSSSD. The interval 127 to 161 is disordered; the sequence is SGTEQDGTAETLPSSSSDKSLDMEKSKDEAQDNGA. Over residues 145–156 the composition is skewed to basic and acidic residues; the sequence is KSLDMEKSKDEA. Residues lysine 151 and lysine 153 each participate in a glycyl lysine isopeptide (Lys-Gly) (interchain with G-Cter in SUMO2) cross-link. Threonine 251 carries the phosphothreonine modification. The tract at residues 298–571 is interaction with CBFA2T3; it reads LPNHMSSSVN…FMSSHIKSVH (274 aa). Residues 332-365 are disordered; it reads IIDDDDDIISSSPDSAVSNTSLVPQADNSKSTTL. Residues 347-365 show a composition bias toward polar residues; sequence AVSNTSLVPQADNSKSTTL. Residues lysine 388, lysine 405, lysine 412, and lysine 447 each participate in a glycyl lysine isopeptide (Lys-Gly) (interchain with G-Cter in SUMO2) cross-link. The span at 451–461 shows a compositional bias: basic and acidic residues; sequence DGGEAKLDNEL. A disordered region spans residues 451-474; that stretch reads DGGEAKLDNELPKTSGSEPPNKRM. Positions 452–671 are interaction with CTNND1; the sequence is GGEAKLDNEL…EFEFIIPESY (220 aa). Residues lysine 463, lysine 472, and lysine 477 each participate in a glycyl lysine isopeptide (Lys-Gly) (interchain with G-Cter in SUMO2) cross-link. The Nuclear localization signal motif lies at 469–478; the sequence is PPNKRMKVKH. C2H2-type zinc fingers lie at residues 492 to 514, 520 to 542, and 548 to 571; these read YICIVCKRSYVCLTSLRRHFNIH, YQCRYCDKVFPLAEYRTKHEIHH, and YQCLTCGKSFINYQFMSSHIKSVH. The segment at 512 to 637 is required for DNA-binding; it reads NIHSWEKKYQ…TSTPPQNKST (126 aa). Glycyl lysine isopeptide (Lys-Gly) (interchain with G-Cter in SUMO2) cross-links involve residues lysine 537, lysine 568, lysine 580, lysine 609, and lysine 616.

As to quaternary structure, interacts with NCOR1. Self-associates. Interacts with CTNND1, and this interaction inhibits binding to both methylated and non-methylated DNA. Interacts with CTNND2. Interacts with KPNA2/RCH1, which may mediate nuclear import of this protein. Interacts with CBFA2T3. In terms of tissue distribution, expressed in brain, heart, kidney, liver, lung, neuromuscular junctions, skeletal muscle, spleen and testis.

Its subcellular location is the nucleus. Its function is as follows. Transcriptional regulator with bimodal DNA-binding specificity. Binds to methylated CpG dinucleotides in the consensus sequence 5'-CGCG-3' and also binds to the non-methylated consensus sequence 5'-CTGCNA-3' also known as the consensus kaiso binding site (KBS). May recruit the N-CoR repressor complex to promote histone deacetylation and the formation of repressive chromatin structures in target gene promoters. Contributes to the repression of target genes of the Wnt signaling pathway. May also activate transcription of a subset of target genes by the recruitment of CTNND2. Represses expression of MMP7 in conjunction with transcriptional corepressors CBFA2T3, CBFA2T2 and RUNX1T1. The protein is Transcriptional regulator Kaiso (Zbtb33) of Mus musculus (Mouse).